Consider the following 428-residue polypeptide: F-box/LRR-repeat protein 3 (428 aa).

The span at Met-1–Ser-21 shows a compositional bias: basic and acidic residues. Positions Met-1–Thr-27 are disordered. Residues Cys-34–Phe-81 form the F-box domain. LRR repeat units lie at residues Ser-119–Ser-146, Asp-181–Ser-207, Cys-208–Tyr-233, His-234–Val-259, Gly-316–Ala-341, Gly-343–Glu-368, and Cys-369–Glu-394.

Part of the SCF (SKP1-CUL1-F-box) E3 ubiquitin-protein ligase complex SCF(FBXL3) composed of CUL1, SKP1, RBX1 and FBXL3. Interacts with CRY1 and CRY2 (phosphorylated). Interacts with HDAC3. Interacts with KDM8. In terms of processing, undergoes autophagy-mediated degradation in the liver in a time-dependent manner. In terms of tissue distribution, widely expressed.

Its subcellular location is the nucleus. The protein localises to the cytoplasm. Its pathway is protein modification; protein ubiquitination. Its function is as follows. Substrate-recognition component of the SCF(FBXL3) E3 ubiquitin ligase complex involved in circadian rhythm function. Plays a key role in the maintenance of both the speed and the robustness of the circadian clock oscillation. The SCF(FBXL3) complex mainly acts in the nucleus and mediates ubiquitination and subsequent degradation of CRY1 and CRY2. Activity of the SCF(FBXL3) complex is counteracted by the SCF(FBXL21) complex. The polypeptide is F-box/LRR-repeat protein 3 (FBXL3) (Homo sapiens (Human)).